A 205-amino-acid polypeptide reads, in one-letter code: Max-like protein homolog 2 (205 aa).

2 stretches are compositionally biased toward low complexity: residues 1–12 and 26–40; these read MSRSRSAAASSS and SASS…ATNS. Residues 1–58 form a disordered region; that stretch reads MSRSRSAAASSSQKPDDMDLMSPDGSASSPSAPNTPATNSGGFSSDRKKATHLRCERQ. Over residues 45-58 the composition is skewed to basic and acidic residues; sequence SDRKKATHLRCERQ. Positions 47 to 60 are basic motif; the sequence is RKKATHLRCERQRR. The bHLH domain maps to 47–101; that stretch reads RKKATHLRCERQRREAINSGYSDLKDLIPQTTTSLGCKTTNAAILFRACDFMSQL. Positions 61 to 101 are helix-loop-helix motif; sequence EAINSGYSDLKDLIPQTTTSLGCKTTNAAILFRACDFMSQL. The stretch at 98-132 forms a coiled coil; it reads MSQLKTDISDADKQLAQLNAQAAALEMIASEYEQM.

As to expression, widely expressed.

The protein resides in the nucleus. It is found in the cytoplasm. It localises to the mitochondrion. In terms of biological role, transcription factor. Binds to the E box motif 5'-CACGTG-3', probably in a heterodimeric complex with mml-1. Involved in modulating longevity in response to TOR signaling, dietary restriction, the decline in protein homeostasis associated with normal aging, germline signaling and the insulin-like signaling pathway. Plays a role in autophagy. Involved in regulating migration of the ray 1 precursor cells in the male tail, acting in concert with Wnt and semaphorin signaling pathways. Regulates transcription of genes encoding extracellular matrix (ECM) components which may contribute to the substratum required for migration of the neighboring ray 1 precursor cells. Required for resistance to oxidative stress. Involved in promoting infection by the microsporidian pathogen N.parisii, probably acting independently of its canonical partner, mml-1. The sequence is that of Max-like protein homolog 2 from Caenorhabditis elegans.